The chain runs to 143 residues: Transcriptional regulator MraZ (143 aa).

SpoVT-AbrB domains lie at Glu-5–Val-47 and Ala-76–Asn-119.

It belongs to the MraZ family. In terms of assembly, forms oligomers.

The protein resides in the cytoplasm. Its subcellular location is the nucleoid. This chain is Transcriptional regulator MraZ, found in Leuconostoc mesenteroides subsp. mesenteroides (strain ATCC 8293 / DSM 20343 / BCRC 11652 / CCM 1803 / JCM 6124 / NCDO 523 / NBRC 100496 / NCIMB 8023 / NCTC 12954 / NRRL B-1118 / 37Y).